Consider the following 172-residue polypeptide: Adenine phosphoribosyltransferase (172 aa).

It belongs to the purine/pyrimidine phosphoribosyltransferase family. As to quaternary structure, homodimer.

The protein localises to the cytoplasm. It catalyses the reaction AMP + diphosphate = 5-phospho-alpha-D-ribose 1-diphosphate + adenine. The protein operates within purine metabolism; AMP biosynthesis via salvage pathway; AMP from adenine: step 1/1. Functionally, catalyzes a salvage reaction resulting in the formation of AMP, that is energically less costly than de novo synthesis. This is Adenine phosphoribosyltransferase from Streptococcus thermophilus (strain ATCC BAA-250 / LMG 18311).